The sequence spans 444 residues: Exodeoxyribonuclease 7 large subunit (444 aa).

The protein belongs to the XseA family. In terms of assembly, heterooligomer composed of large and small subunits.

It is found in the cytoplasm. The catalysed reaction is Exonucleolytic cleavage in either 5'- to 3'- or 3'- to 5'-direction to yield nucleoside 5'-phosphates.. Functionally, bidirectionally degrades single-stranded DNA into large acid-insoluble oligonucleotides, which are then degraded further into small acid-soluble oligonucleotides. The protein is Exodeoxyribonuclease 7 large subunit of Pseudoalteromonas atlantica (strain T6c / ATCC BAA-1087).